The chain runs to 508 residues: Steroid 17-alpha-hydroxylase/17,20 lyase (508 aa).

Position 445 (Cys445) interacts with heme.

This sequence belongs to the cytochrome P450 family. Heme serves as cofactor.

It localises to the membrane. It catalyses the reaction a C21-steroid + reduced [NADPH--hemoprotein reductase] + O2 = a 17alpha-hydroxy-C21-steroid + oxidized [NADPH--hemoprotein reductase] + H2O + H(+). It carries out the reaction 17alpha-hydroxyprogesterone + reduced [NADPH--hemoprotein reductase] + O2 = androst-4-ene-3,17-dione + acetate + oxidized [NADPH--hemoprotein reductase] + H2O + 2 H(+). The catalysed reaction is 17alpha-hydroxypregnenolone + reduced [NADPH--hemoprotein reductase] + O2 = 3beta-hydroxyandrost-5-en-17-one + acetate + oxidized [NADPH--hemoprotein reductase] + H2O + 2 H(+). It functions in the pathway lipid metabolism; steroid biosynthesis. Functionally, conversion of pregnenolone and progesterone to their 17-alpha-hydroxylated products and subsequently to dehydroepiandrosterone (DHEA) and androstenedione. Catalyzes both the 17-alpha-hydroxylation and the 17,20-lyase reaction. In Gallus gallus (Chicken), this protein is Steroid 17-alpha-hydroxylase/17,20 lyase (CYP17A1).